The sequence spans 120 residues: Membrane-anchored ubiquitin-fold protein 5 (120 aa).

The 66-residue stretch at 7–72 (IELKFRLADG…ILENNKTLSE (66 aa)) folds into the Ubiquitin-like domain. Residue cysteine 115 is the site of S-palmitoyl cysteine attachment. Cysteine methyl ester is present on cysteine 117. The S-geranylgeranyl cysteine moiety is linked to residue cysteine 117. Residues 118–120 (CIL) constitute a propeptide, removed in mature form.

Ubiquitous.

The protein resides in the cell membrane. May serve as docking site to facilitate the association of other proteins to the plasma membrane. This chain is Membrane-anchored ubiquitin-fold protein 5 (MUB5), found in Arabidopsis thaliana (Mouse-ear cress).